The sequence spans 345 residues: Heat-inducible transcription repressor HrcA (345 aa).

It belongs to the HrcA family.

Its function is as follows. Negative regulator of class I heat shock genes (grpE-dnaK-dnaJ and groELS operons). Prevents heat-shock induction of these operons. The polypeptide is Heat-inducible transcription repressor HrcA (Listeria monocytogenes serotype 1/2a (strain 10403S)).